Here is a 744-residue protein sequence, read N- to C-terminus: Serine/threonine-protein kinase GM11705 (744 aa).

Over residues 17-35 (VLSSHQPSPSATHPQSVPS) the composition is skewed to polar residues. Disordered stretches follow at residues 17–38 (VLSSHQPSPSATHPQSVPSKAN) and 54–78 (NVQEDNSYNRDCDSPVSSSSEPEKE). 2 consecutive Doublecortin domains span residues 154 to 240 (LRIK…VEYN) and 309 to 392 (RIVT…AEDF). A Protein kinase domain is found at 473–731 (YTLGRIIGDG…SEDILDHPWT (259 aa)). Residues 479-487 (IGDGNFAIV) and Lys502 contribute to the ATP site. Catalysis depends on Asp594, which acts as the Proton acceptor.

The protein belongs to the protein kinase superfamily. CAMK Ser/Thr protein kinase family. CaMK subfamily.

The enzyme catalyses L-seryl-[protein] + ATP = O-phospho-L-seryl-[protein] + ADP + H(+). It carries out the reaction L-threonyl-[protein] + ATP = O-phospho-L-threonyl-[protein] + ADP + H(+). This chain is Serine/threonine-protein kinase GM11705, found in Drosophila sechellia (Fruit fly).